The chain runs to 1840 residues: Collagen alpha-1(V) chain (1840 aa).

Residues 1–30 (MDVHTRWKAPRPGAPLLSSPLLLLLLLLWA) form the signal peptide. One can recognise a Laminin G-like domain in the interval 72 to 244 (DVAYRVSKDA…DYCEHYSPDC (173 aa)). Residues 231 to 445 (RAAYDYCEHY…MPANQDTIYE (215 aa)) are nonhelical region. Sulfotyrosine is present on residues Tyr234, Tyr236, Tyr240, Tyr262, Tyr263, Tyr336, Tyr338, and Tyr344. Disordered regions lie at residues 241 to 547 (SPDC…QESQ) and 561 to 1576 (GPAG…EVIQ). Residues 258-268 (NPDEYYPEGEG) are compositionally biased toward acidic residues. 3 stretches are compositionally biased toward low complexity: residues 335 to 352 (DYDY…PYED), 375 to 387 (PTST…SSNP), and 462 to 471 (IIEPGMLIEG). The tract at residues 446-560 (GIGGPRGEKG…ILQQARLALR (115 aa)) is interrupted collagenous region. A compositionally biased stretch (pro residues) spans 472-487 (PPGPEGPAGLPGPPGT). Composition is skewed to low complexity over residues 508 to 525 (LPGA…LMLP) and 561 to 572 (GPAGPMGLTGRP). A triple-helical region region spans residues 561–1572 (GPAGPMGLTG…GLPGPPGPPG (1012 aa)). Pro572, Pro578, and Pro623 each carry 4-hydroxyproline. Lys629 is subject to 5-hydroxylysine. Pro641 bears the 4-hydroxyproline mark. Position 644 is a 5-hydroxylysine (Lys644). 4-hydroxyproline is present on residues Pro650, Pro656, Pro659, Pro677, and Pro680. Residues 673–688 (PRGLPGEPGPRGLLGP) are compositionally biased toward low complexity. 3-hydroxyproline occurs at positions 682 and 688. The segment covering 689–698 (KGPPGPPGPP) has biased composition (pro residues). Residues Pro692, Pro698, and Pro707 each carry the 4-hydroxyproline modification. A 5-hydroxylysine modification is found at Lys710. 4-hydroxyproline is present on residues Pro719, Pro722, Pro728, and Pro734. A compositionally biased stretch (low complexity) spans 724 to 743 (QQGNPGAQGLPGPQGAIGPP). A 5-hydroxylysine modification is found at Lys746. Over residues 749 to 758 (LGKPGLPGMP) the composition is skewed to low complexity. Residues Pro752, Pro758, Pro764, Pro767, and Pro773 each carry the 4-hydroxyproline modification. 5-hydroxylysine is present on Lys776. 2 positions are modified to 4-hydroxyproline: Pro782 and Pro791. 5-hydroxylysine is present on residues Lys797, Lys806, Lys809, and Lys812. Pro818 carries the 4-hydroxyproline modification. 5-hydroxylysine is present on Lys821. Position 836 is a 4-hydroxyproline (Pro836). Basic and acidic residues predominate over residues 839 to 848 (RGEDGPEGPK). Residues Lys848 and Lys866 each carry the 5-hydroxylysine modification. 3 positions are modified to 4-hydroxyproline: Pro872, Pro875, and Pro878. Lys884 bears the 5-hydroxylysine mark. Pro890 and Pro893 each carry 4-hydroxyproline. Lys899 carries the 5-hydroxylysine modification. 2 positions are modified to 4-hydroxyproline: Pro905 and Pro908. Positions 910–919 (PRGQRGPTGP) are enriched in low complexity. Pro932 and Pro947 each carry 4-hydroxyproline. Low complexity-rich tracts occupy residues 973 to 992 (KDGL…QGKT) and 1001 to 1013 (VGPQ…TGPM). Pro1019, Pro1022, Pro1025, and Pro1031 each carry 4-hydroxyproline. Positions 1090-1106 (SPGERGPAGAAGPIGIP) are enriched in low complexity. The segment covering 1108–1117 (RPGPQGPPGP) has biased composition (pro residues). Pro1223 and Pro1226 each carry 4-hydroxyproline. A compositionally biased stretch (low complexity) spans 1261 to 1270 (PSGAPGADGP). Gly residues predominate over residues 1296 to 1305 (GLPGEGGPLG). Composition is skewed to pro residues over residues 1382–1400 (TGEP…PGPA) and 1456–1471 (SPGP…PPGL). Residues Pro1469 and Pro1472 each carry the 4-hydroxyproline modification. The span at 1487 to 1496 (PGLIGLIGPP) shows a compositional bias: low complexity. Residues 1528–1543 (PLGPPGPPGLPGPPGP) are compositionally biased toward pro residues. Over residues 1544–1556 (KGAKGSSGPTGPK) the composition is skewed to low complexity. Positions 1573 to 1607 (EVIQPLPIQASRTRRNIDASQLLDDGAGESYVDYA) are nonhelical region. Sulfotyrosine occurs at positions 1603 and 1606. In terms of domain architecture, Fibrillar collagen NC1 spans 1611-1839 (EEIFGSLNSL…GFEVGPACFL (229 aa)).

It belongs to the fibrillar collagen family. In terms of assembly, trimers of two alpha 1(V) and one alpha 2(V) chains in most tissues and trimers of one alpha 1(V), one alpha 2(V), and one alpha 3(V) chains in placenta. Interacts with CSPG4. In terms of processing, prolines at the third position of the tripeptide repeating unit (G-X-Y) are hydroxylated in some or all of the chains. Sulfated on 40% of tyrosines. Post-translationally, hydroxylation on proline residues within the sequence motif, GXPG, is most likely to be 4-hydroxy as this fits the requirement for 4-hydroxylation in vertebrates. A high molecular weight form was detected in Schwann cells and peripheral nerve. A lower, probably processed form, is detected in all other tissues tested (at protein level).

The protein localises to the secreted. Its subcellular location is the extracellular space. The protein resides in the extracellular matrix. Type V collagen is a member of group I collagen (fibrillar forming collagen). It is a minor connective tissue component of nearly ubiquitous distribution. Type V collagen binds to DNA, heparan sulfate, thrombospondin, heparin, and insulin. This is Collagen alpha-1(V) chain (Col5a1) from Rattus norvegicus (Rat).